An 89-amino-acid chain; its full sequence is Small ribosomal subunit protein uS15 (89 aa).

Over residues methionine 1–glutamate 10 the composition is skewed to basic and acidic residues. The tract at residues methionine 1–serine 24 is disordered.

This sequence belongs to the universal ribosomal protein uS15 family. As to quaternary structure, part of the 30S ribosomal subunit. Forms a bridge to the 50S subunit in the 70S ribosome, contacting the 23S rRNA.

Its function is as follows. One of the primary rRNA binding proteins, it binds directly to 16S rRNA where it helps nucleate assembly of the platform of the 30S subunit by binding and bridging several RNA helices of the 16S rRNA. Forms an intersubunit bridge (bridge B4) with the 23S rRNA of the 50S subunit in the ribosome. The chain is Small ribosomal subunit protein uS15 from Novosphingobium aromaticivorans (strain ATCC 700278 / DSM 12444 / CCUG 56034 / CIP 105152 / NBRC 16084 / F199).